The chain runs to 404 residues: MAAGTAVGAWVLVLSLWGAVVGAQNITARIGEPLVLKCKGAPKKPPQRLEWKLNTGRTEAWKVLSPQGGGPWDSVARVLPNGSLFLPAVGIQDEGIFRCQAMNRNGKETKSNYRVRVYQIPGKPEIVDSASELTAGVPNKVGTCVSEGSYPAGTLSWHLDGKPLVPNEKGVSVKEQTRRHPETGLFTLQSELMVTPARGGDPRPTFSCSFSPGLPRHRALRTAPIQPRVWEPVPLEEVQLVVEPEGGAVAPGGTVTLTCEVPAQPSPQIHWMKDGVPLPLPPSPVLILPEIGPQDQGTYSCVATHSSHGPQESRAVSISIIEPGEEGPTAGSVGGSGLGTLALALGILGGLGTAALLIGVILWQRRQRRGEERKAPENQEEEEERAELNQSEEPEAGESSTGGP.

The first 22 residues, 1 to 22 (MAAGTAVGAWVLVLSLWGAVVG), serve as a signal peptide directing secretion. Positions 23-116 (AQNITARIGE…KETKSNYRVR (94 aa)) constitute an Ig-like V-type domain. Topologically, residues 23 to 342 (AQNITARIGE…VGGSGLGTLA (320 aa)) are extracellular. Asn25 and Asn81 each carry an N-linked (GlcNAc...) asparagine glycan. 2 disulfide bridges follow: Cys38-Cys99 and Cys144-Cys208. Ig-like C2-type domains follow at residues 124–221 (PEIV…RALR) and 227–317 (PRVW…RAVS). A helical membrane pass occupies residues 343–363 (LALGILGGLGTAALLIGVILW). Residues 364 to 404 (QRRQRRGEERKAPENQEEEEERAELNQSEEPEAGESSTGGP) are Cytoplasmic-facing. Residues 367 to 404 (QRRGEERKAPENQEEEEERAELNQSEEPEAGESSTGGP) form a disordered region. Residues 378–396 (NQEEEEERAELNQSEEPEA) are compositionally biased toward acidic residues. The residue at position 391 (Ser391) is a Phosphoserine; by PKC/PRKCZ and ATM.

Constitutive homodimer; disulfide-linked. Forms homooligomers. Interacts with S100A1 and APP. Interacts with S100B, S100A12 and S100A14. Interacts with TIRAP. Interacts with HMGB1. Interacts with LGP2; this interaction plays an important role in AGER-mediated pro-inflammatory responses and cytokine release. Interacts with double-strand break repair protein MRE11 which is a core component of the MRN complex. The interaction enhances MRE11 endonuclease activity and promotes DNA repair. Interacts with the MCM2-7 complex via interaction with complex member MCM2; the interaction is increased following DNA replication stress and stabilizes the MCM2-7 complex at replication forks. Interacts with longistatin, a protein from the saliva of the tick, Haemaphysalis longicornis; the interaction attenuates AGER-mediated production of reactive oxygen species (ROS), activation of NF-kappa-B and expression of adhesion molecules and cytokines in human endothelial cells. Post-translationally, phosphorylated on its cytoplasmic domain by PKCzeta/PRKCZ upon ligand binding. Phosphorylated by ATM following DNA damage. Targeted by the ubiquitin E3 ligase subunit FBXO10 to mediate its ubiquitination and degradation. Endothelial cells. Increased expression in pre-term labor and preeclampsia placentas compared to controls.

Its subcellular location is the cell membrane. It localises to the cell projection. The protein localises to the phagocytic cup. It is found in the early endosome. The protein resides in the nucleus. Its subcellular location is the secreted. In terms of biological role, cell surface pattern recognition receptor that senses endogenous stress signals with a broad ligand repertoire including advanced glycation end products, S100 proteins, high-mobility group box 1 protein/HMGB1, amyloid beta/APP oligomers, nucleic acids, histones, phospholipids and glycosaminoglycans. Advanced glycosylation end products are nonenzymatically glycosylated proteins which accumulate in vascular tissue in aging and at an accelerated rate in diabetes. These ligands accumulate at inflammatory sites during the pathogenesis of various diseases including diabetes, vascular complications, neurodegenerative disorders and cancers, and RAGE transduces their binding into pro-inflammatory responses. Upon ligand binding, uses TIRAP and MYD88 as adapters to transduce the signal ultimately leading to the induction of inflammatory cytokines IL6, IL8 and TNFalpha through activation of NF-kappa-B. Interaction with S100A12 on endothelium, mononuclear phagocytes, and lymphocytes triggers cellular activation, with generation of key pro-inflammatory mediators. Interaction with S100B after myocardial infarction may play a role in myocyte apoptosis by activating ERK1/2 and p53/TP53 signaling. Contributes to the translocation of amyloid-beta peptide (ABPP) across the cell membrane from the extracellular to the intracellular space in cortical neurons. ABPP-initiated RAGE signaling, especially stimulation of p38 mitogen-activated protein kinase (MAPK), has the capacity to drive a transport system delivering ABPP as a complex with RAGE to the intraneuronal space. Participates in endothelial albumin transcytosis together with HMGB1 through the RAGE/SRC/Caveolin-1 pathway, leading to endothelial hyperpermeability. Mediates the loading of HMGB1 in extracellular vesicles (EVs) that shuttle HMGB1 to hepatocytes by transferrin-mediated endocytosis and subsequently promote hepatocyte pyroptosis by activating the NLRP3 inflammasome. Binds to DNA and promotes extracellular hypomethylated DNA (CpG DNA) uptake by cells via the endosomal route to activate inflammatory responses. Mediates phagocytosis by non-professional phagocytes (NPP) and this is enhanced by binding to ligands including RNA, DNA, HMGB1 and histones. Promotes NPP-mediated phagocytosis of Saccharomyces cerevisiae spores by binding to RNA attached to the spore wall. Also promotes NPP-mediated phagocytosis of apoptotic cells. Following DNA damage, recruited to DNA double-strand break sites where it colocalizes with the MRN repair complex via interaction with double-strand break repair protein MRE11. Enhances the endonuclease activity of MRE11, promoting the end resection of damaged DNA. Promotes DNA damage repair in trophoblasts which enhances trophoblast invasion and contributes to placental development and maintenance. Protects cells from DNA replication stress by localizing to damaged replication forks where it stabilizes the MCM2-7 complex and promotes faithful progression of the replication fork. Mediates the production of reactive oxygen species (ROS) in human endothelial cells. In Homo sapiens (Human), this protein is Advanced glycosylation end product-specific receptor (AGER).